Here is a 621-residue protein sequence, read N- to C-terminus: E3 SUMO-protein ligase PIAS2 (621 aa).

Residues 11 to 45 (VSSFRVSELQVLLGFAGRNKSGRKHDLLMRALHLL) enclose the SAP domain. Positions 19 to 23 (LQVLL) match the LXXLL motif motif. Glycyl lysine isopeptide (Lys-Gly) (interchain with G-Cter in SUMO2) cross-links involve residues Lys46 and Lys249. The region spanning 134–299 (QPSPPIPPVH…SMSVYLVRQL (166 aa)) is the PINIT domain. The SP-RING-type zinc-finger motif lies at 331-412 (PDSEIATTSL…FMEILNDCSD (82 aa)). 4 residues coordinate Zn(2+): Cys362, His364, Cys385, and Cys388. Residues Lys430, Lys435, Lys443, and Lys452 each participate in a glycyl lysine isopeptide (Lys-Gly) (interchain with G-Cter in SUMO2) cross-link. Residues 467-473 (IDVIDLT) form an SUMO1-binding region. A phosphoserine mark is found at Ser476, Ser477, and Ser478. The Nuclear localization signal motif lies at 484 to 492 (PPAKRKCIF). Residue Lys489 forms a Glycyl lysine isopeptide (Lys-Gly) (interchain with G-Cter in SUMO2) linkage. Ser499 is modified (phosphoserine). Residue Lys502 forms a Glycyl lysine isopeptide (Lys-Gly) (interchain with G-Cter in SUMO2) linkage. The segment covering 577–610 (TASSTSVTTTSPHESSTHVSSSSSRSETGVITSS) has biased composition (low complexity). A disordered region spans residues 577 to 621 (TASSTSVTTTSPHESSTHVSSSSSRSETGVITSSGRNIPDIISLD).

Belongs to the PIAS family. Binds SUMO1 and UBE2I. Interacts with AXIN1, JUN, MDM2, PARK7, TP53 and TP73 isoform alpha, but not TP73 isoform beta. Interacts with STAT4 following IL12 and IFN-alpha stimulation of T-cells. Interacts also with GTF2I, GTF2IRD1, IKFZ1, DAB2 and MSX2, as well as with several steroid receptors, including ESR1, ESR2, NR3C1, PGR, AR, and with NCOA2. Sumoylation of a target protein seems to enhance the interaction. Binds to sumoylated ELK1. Interacts with PLAG1. Binds DNA, such as CDKN1A promoter, in a sequence-specific manner. Interacts with KLF8; the interaction results in SUMO ligation and repression of KLF8 transcriptional activity and of its cell cycle progression into G(1) phase. Interacts with IFIH1/MDA5. Interacts with PML. Interacts with PRDM1. In terms of processing, sumoylated.

The protein resides in the nucleus speckle. Its subcellular location is the nucleus. It is found in the PML body. The catalysed reaction is S-ubiquitinyl-[E2 ubiquitin-conjugating enzyme]-L-cysteine + [acceptor protein]-L-lysine = [E2 ubiquitin-conjugating enzyme]-L-cysteine + N(6)-ubiquitinyl-[acceptor protein]-L-lysine.. Its pathway is protein modification; protein sumoylation. In terms of biological role, functions as an E3-type small ubiquitin-like modifier (SUMO) ligase, stabilizing the interaction between UBE2I and the substrate, and as a SUMO-tethering factor. Plays a crucial role as a transcriptional coregulation in various cellular pathways, including the STAT pathway, the p53 pathway and the steroid hormone signaling pathway. The effects of this transcriptional coregulation, transactivation or silencing may vary depending upon the biological context and PIAS2 isoform studied. However, it seems to be mostly involved in gene silencing. Binds to sumoylated ELK1 and enhances its transcriptional activity by preventing recruitment of HDAC2 by ELK1, thus reversing SUMO-mediated repression of ELK1 transactivation activity. Isoform PIASx-beta, but not isoform PIASx-alpha, promotes MDM2 sumoylation. Isoform PIASx-alpha promotes PARK7 sumoylation. Isoform PIASx-beta promotes NCOA2 sumoylation more efficiently than isoform PIASx-alpha. Sumoylates PML at'Lys-65' and 'Lys-160'. This chain is E3 SUMO-protein ligase PIAS2 (Pias2), found in Mus musculus (Mouse).